Consider the following 62-residue polypeptide: Calmodulin regulator protein PCP4 (62 aa).

Positions 1 to 39 (MSERQSAGATNGKDKTSGDNDGQKKVQEEFDIDMDAPET) are disordered. Over residues 12-28 (GKDKTSGDNDGQKKVQE) the composition is skewed to basic and acidic residues. Residues 28-40 (EEFDIDMDAPETE) are acidic; binds calcium and is required for modulating the calcium-binding kinetics of calmodulin. The 24-residue stretch at 39 to 62 (TERAAVAIQSQFRKFQKKKAGSQS) folds into the IQ domain.

It belongs to the PCP4 family. Binds to both calcium-free and calcium-bound calmodulin. The affinity for the calcium-bound form is 50-fold greater.

In terms of biological role, functions as a modulator of calcium-binding by calmodulin. Thereby, regulates calmodulin activity and the different processes it controls. For instance, may play a role in neuronal differentiation through activation of calmodulin-dependent kinase signaling pathways. The protein is Calmodulin regulator protein PCP4 of Mus musculus (Mouse).